A 1138-amino-acid chain; its full sequence is Phosphatidylserine decarboxylase proenzyme 2 (1138 aa).

Positions 1-122 constitute a C2 1 domain; the sequence is MRIIKGRKRG…SNSGLSSHSH (122 aa). Disordered regions lie at residues 90–166, 269–305, and 413–448; these read TGAP…PGST, MRSSSSLPPPLEDMLSNSSAVSGNEIRREKPYSDTDL, and AVSENDITSVDDEESENQQESDEEFDIYNEDEREDS. A compositionally biased stretch (low complexity) spans 98 to 121; that stretch reads SRPRTTTANTSSSTLSNSGLSSHS. The segment covering 125-135 has biased composition (polar residues); that stretch reads RNLNVTSKGNQ. Positions 136–166 are enriched in low complexity; the sequence is TSTSINSVSSSATPAPSHSSSSLSTTGPGST. Over residues 293 to 305 the composition is skewed to basic and acidic residues; that stretch reads EIRREKPYSDTDL. Positions 421–448 are enriched in acidic residues; it reads SVDDEESENQQESDEEFDIYNEDEREDS. A C2 2 domain is found at 478–600; sequence RRAKSNFFIS…QQQQHENEWI (123 aa). Positions 571, 574, and 577 each coordinate Ca(2+). Active-site charge relay system; for autoendoproteolytic cleavage activity residues include Asp899, His956, and Ser1043. Ser1043 functions as the Schiff-base intermediate with substrate; via pyruvic acid; for decarboxylase activity in the catalytic mechanism. Ser1043 carries the pyruvic acid (Ser); by autocatalysis modification.

Belongs to the phosphatidylserine decarboxylase family. PSD-B subfamily. Eukaryotic type II sub-subfamily. Heterodimer of a large membrane-associated beta subunit and a small pyruvoyl-containing alpha subunit. Interacts with pstB2/PDR17. This interaction may be a means to structurally tether the donor membrane (ER) harboring PstB2/PDR17 to acceptor membranes (Golgi/endosomes) harboring PSD2 during PtdSer transport to the site of PtdEtn synthesis. It depends on pyruvate as a cofactor. Ca(2+) is required as a cofactor. Is synthesized initially as an inactive proenzyme. Formation of the active enzyme involves a self-maturation process in which the active site pyruvoyl group is generated from an internal serine residue via an autocatalytic post-translational modification. Two non-identical subunits are generated from the proenzyme in this reaction, and the pyruvate is formed at the N-terminus of the alpha chain, which is derived from the carboxyl end of the proenzyme. The autoendoproteolytic cleavage occurs by a canonical serine protease mechanism, in which the side chain hydroxyl group of the serine supplies its oxygen atom to form the C-terminus of the beta chain, while the remainder of the serine residue undergoes an oxidative deamination to produce ammonia and the pyruvoyl prosthetic group on the alpha chain. During this reaction, the Ser that is part of the protease active site of the proenzyme becomes the pyruvoyl prosthetic group, which constitutes an essential element of the active site of the mature decarboxylase.

Its subcellular location is the golgi apparatus membrane. The protein resides in the endosome membrane. It catalyses the reaction a 1,2-diacyl-sn-glycero-3-phospho-L-serine + H(+) = a 1,2-diacyl-sn-glycero-3-phosphoethanolamine + CO2. Its pathway is phospholipid metabolism; phosphatidylethanolamine biosynthesis; phosphatidylethanolamine from CDP-diacylglycerol: step 2/2. Catalyzes the formation of phosphatidylethanolamine (PtdEtn) from phosphatidylserine (PtdSer). Plays a central role in phospholipid metabolism and in the interorganelle trafficking of phosphatidylserine. Phosphatidylethanolamine produced by PSD2 is insufficient to completely provide the PtdEtn pool required by mitochondria under respiratory conditions. PSD2 is also involved in the PtdSer transport step to the site of PtdEtn synthesis on the Golgi/endosome membranes. Required for normal heavy metal resistance. The protein is Phosphatidylserine decarboxylase proenzyme 2 of Saccharomyces cerevisiae (strain ATCC 204508 / S288c) (Baker's yeast).